A 430-amino-acid polypeptide reads, in one-letter code: 3-phosphoshikimate 1-carboxyvinyltransferase (430 aa).

3-phosphoshikimate-binding residues include lysine 20, serine 21, and arginine 25. Lysine 20 contributes to the phosphoenolpyruvate binding site. Phosphoenolpyruvate contacts are provided by glycine 90 and arginine 118. 3-phosphoshikimate-binding residues include serine 163, serine 164, glutamine 165, serine 191, aspartate 311, and lysine 338. Glutamine 165 serves as a coordination point for phosphoenolpyruvate. The active-site Proton acceptor is the aspartate 311. Arginine 342 and arginine 383 together coordinate phosphoenolpyruvate.

It belongs to the EPSP synthase family. In terms of assembly, monomer.

It is found in the cytoplasm. The enzyme catalyses 3-phosphoshikimate + phosphoenolpyruvate = 5-O-(1-carboxyvinyl)-3-phosphoshikimate + phosphate. Its pathway is metabolic intermediate biosynthesis; chorismate biosynthesis. Functionally, catalyzes the transfer of the enolpyruvyl moiety of phosphoenolpyruvate (PEP) to the 5-hydroxyl of shikimate-3-phosphate (S3P) to produce enolpyruvyl shikimate-3-phosphate and inorganic phosphate. This chain is 3-phosphoshikimate 1-carboxyvinyltransferase, found in Methanosarcina acetivorans (strain ATCC 35395 / DSM 2834 / JCM 12185 / C2A).